We begin with the raw amino-acid sequence, 502 residues long: RNA-splicing ligase RtcB homolog 2 (502 aa).

5 residues coordinate Mn(2+): aspartate 120, cysteine 123, histidine 228, histidine 260, and histidine 354. A GMP-binding site is contributed by 227–231; that stretch reads NHYAE. Residues 354-355, 403-406, serine 410, and 429-432 each bind GMP; these read HN, GGSM, and HGAG. Histidine 429 functions as the GMP-histidine intermediate in the catalytic mechanism.

The protein belongs to the RtcB family. In terms of assembly, catalytic component of the tRNA-splicing ligase complex. Mn(2+) is required as a cofactor.

The enzyme catalyses a 3'-end 3'-phospho-ribonucleotide-RNA + a 5'-end dephospho-ribonucleoside-RNA + GTP = a ribonucleotidyl-ribonucleotide-RNA + GMP + diphosphate. It carries out the reaction a 3'-end 2',3'-cyclophospho-ribonucleotide-RNA + a 5'-end dephospho-ribonucleoside-RNA + GTP + H2O = a ribonucleotidyl-ribonucleotide-RNA + GMP + diphosphate + H(+). Catalytic subunit of the tRNA-splicing ligase complex that acts by directly joining spliced tRNA halves to mature-sized tRNAs by incorporating the precursor-derived splice junction phosphate into the mature tRNA as a canonical 3',5'-phosphodiester. May act as an RNA ligase with broad substrate specificity, and may function toward other RNAs. The polypeptide is RNA-splicing ligase RtcB homolog 2 (Culex quinquefasciatus (Southern house mosquito)).